The primary structure comprises 242 residues: Small ribosomal subunit protein uS2 (242 aa).

It belongs to the universal ribosomal protein uS2 family.

The polypeptide is Small ribosomal subunit protein uS2 (Shewanella denitrificans (strain OS217 / ATCC BAA-1090 / DSM 15013)).